Consider the following 216-residue polypeptide: Phosducin-like protein 3 (216 aa).

A coiled-coil region spans residues 13–59 (AKTIEQQLDQQLDRLDNLDSDDLKVLREQRLREMKDLNNKKQEWLRN). One can recognise a Phosducin domain in the interval 29 to 163 (NLDSDDLKVL…DLGNCDDFAT (135 aa)).

The protein belongs to the phosducin family. In terms of tissue distribution, highly expressed in germline cells of the testis from the spermatogonia stage until the early spermatid stage but is no longer observed in late-stage spermatids in the distal end of the testis.

The enzyme catalyses [thioredoxin]-dithiol + NADP(+) = [thioredoxin]-disulfide + NADPH + H(+). In terms of biological role, has redox activity with thioredoxin. Required for male fertility and maturation of sperm past the canoe stage during spermiogenesis. The protein is Phosducin-like protein 3 of Drosophila melanogaster (Fruit fly).